A 233-amino-acid polypeptide reads, in one-letter code: Forkhead box protein L3 (233 aa).

A DNA-binding region (fork-head) is located at residues 32-130 (RPAYSYIALI…ENGNYRRRRR (99 aa)). The segment covering 125-134 (YRRRRRRRGP) has biased composition (basic residues). The segment at 125–198 (YRRRRRRRGP…PRDLKFSIDY (74 aa)) is disordered. A compositionally biased stretch (pro residues) spans 175–184 (REPPASPAPP). Basic and acidic residues predominate over residues 185-194 (GKEHPRDLKF).

It localises to the nucleus. Functionally, probable transcriptional regulator. This chain is Forkhead box protein L3, found in Homo sapiens (Human).